The chain runs to 199 residues: FMN-dependent NADH:quinone oxidoreductase (199 aa).

Ser10 is a binding site for FMN.

It belongs to the azoreductase type 1 family. As to quaternary structure, homodimer. FMN serves as cofactor.

It catalyses the reaction 2 a quinone + NADH + H(+) = 2 a 1,4-benzosemiquinone + NAD(+). It carries out the reaction N,N-dimethyl-1,4-phenylenediamine + anthranilate + 2 NAD(+) = 2-(4-dimethylaminophenyl)diazenylbenzoate + 2 NADH + 2 H(+). Its function is as follows. Quinone reductase that provides resistance to thiol-specific stress caused by electrophilic quinones. Also exhibits azoreductase activity. Catalyzes the reductive cleavage of the azo bond in aromatic azo compounds to the corresponding amines. This chain is FMN-dependent NADH:quinone oxidoreductase, found in Cellvibrio japonicus (strain Ueda107) (Pseudomonas fluorescens subsp. cellulosa).